The chain runs to 157 residues: Transcriptional repressor NrdR (157 aa).

A zinc finger spans residues 3–34; that stretch reads CPFCNAEDTKVIDSRLVEEGTQVRRRRECLKC. In terms of domain architecture, ATP-cone spans 49–139; sequence PRIIKRDGRR…VYRSFQDINA (91 aa).

This sequence belongs to the NrdR family. Zn(2+) serves as cofactor.

In terms of biological role, negatively regulates transcription of bacterial ribonucleotide reductase nrd genes and operons by binding to NrdR-boxes. The protein is Transcriptional repressor NrdR of Coxiella burnetii (strain CbuK_Q154) (Coxiella burnetii (strain Q154)).